The sequence spans 536 residues: MAAVAAPMASKPRGSKAESFVDNKRREDIRFANINSARAVSDAVRTSLGPKGMDKMISTANGEVIITNDGATILNKMEVLQPAAKMLVELSKSQDSAAGDGTTTVVVIAGALLKECQSLLTNGIHPTVISDSLHKACGKAIDILTAMAVPVELTDRDSLVKSASTSLNSKVVSQYSTLLAPLAVDAVLSVIDPEKPEIVDLRDIKIVKKLGGTVDDTHTVKGLVFDKKVSRAAGGPTRVENAKIAVIQFQISPPKTDIEQSIVVSDYTQMDRILKEERNYILGMIKKIKATGCNVLLIQKSILRDAVTDLSLHYLAKAKIMVIKDVERDEIEFVTKTLNCLPIANIEHFRAEKLGHADLVEEASLGDGKILKITGIKDMGRTTSVLVRGSNQLVLDEAERSLHDALCVVRCLVSKRFLIAGGGAPEIELSRQLGAWAKVLHGMEGYCVKSFAEALEVIPYTLAENAGLNPIAIVTELRNKHAQGEINAGINVRKGQITNILEENVVQPLLVSTSAITLATECVRMILKIDDIVTVR.

The tract at residues 1–21 (MAAVAAPMASKPRGSKAESFV) is disordered.

This sequence belongs to the TCP-1 chaperonin family. In terms of assembly, heterooligomeric complex of about 850 to 900 kDa that forms two stacked rings, 12 to 16 nm in diameter.

Its subcellular location is the cytoplasm. Its function is as follows. Molecular chaperone; assists the folding of proteins upon ATP hydrolysis. Known to play a role, in vitro, in the folding of actin and tubulin. The chain is T-complex protein 1 subunit delta from Arabidopsis thaliana (Mouse-ear cress).